Here is a 347-residue protein sequence, read N- to C-terminus: D-alanine--D-alanine ligase (347 aa).

The ATP-grasp domain maps to 134–332 (KLYAKDLGVK…LAQSLPKTPK (199 aa)). Position 161-216 (161-216 (LIKFNFPFIVKPSNAGSSLGVNVVKEEKELVYALDSAFEYSKEVLIEPFIQGVKEY)) interacts with ATP. Mg(2+) contacts are provided by Asp288, Glu300, and Asn302.

Belongs to the D-alanine--D-alanine ligase family. The cofactor is Mg(2+). Mn(2+) serves as cofactor.

Its subcellular location is the cytoplasm. The catalysed reaction is 2 D-alanine + ATP = D-alanyl-D-alanine + ADP + phosphate + H(+). Its pathway is cell wall biogenesis; peptidoglycan biosynthesis. Functionally, cell wall formation. The chain is D-alanine--D-alanine ligase from Helicobacter pylori (strain P12).